The sequence spans 58 residues: Large ribosomal subunit protein bL32 (58 aa).

Belongs to the bacterial ribosomal protein bL32 family.

The protein is Large ribosomal subunit protein bL32 of Staphylococcus aureus (strain NCTC 8325 / PS 47).